Consider the following 384-residue polypeptide: Putative sarcosine oxidase (384 aa).

Residue 6 to 36 coordinates FAD; sequence DVVVVGAGIFGSCTAYNCQKIGLKTLLLEQF. Cysteine 315 bears the S-8alpha-FAD cysteine mark.

The protein belongs to the MSOX/MTOX family. It depends on FAD as a cofactor.

It carries out the reaction sarcosine + O2 + H2O = formaldehyde + glycine + H2O2. This is Putative sarcosine oxidase from Caenorhabditis elegans.